We begin with the raw amino-acid sequence, 338 residues long: Large ribosomal subunit protein uL10 (338 aa).

Residues 298–338 (TVQQSQSQQPAAEEKKEEKKEEEKKGPSEEEIASGLASLFG) form a disordered region. Over residues 309–325 (AEEKKEEKKEEEKKGPS) the composition is skewed to basic and acidic residues.

This sequence belongs to the universal ribosomal protein uL10 family. In terms of assembly, part of the 50S ribosomal subunit. Forms part of the ribosomal stalk which helps the ribosome interact with GTP-bound translation factors. Forms a heptameric L10(L12)2(L12)2(L12)2 complex, where L10 forms an elongated spine to which the L12 dimers bind in a sequential fashion.

Forms part of the ribosomal stalk, playing a central role in the interaction of the ribosome with GTP-bound translation factors. The polypeptide is Large ribosomal subunit protein uL10 (Saccharolobus solfataricus (strain ATCC 35092 / DSM 1617 / JCM 11322 / P2) (Sulfolobus solfataricus)).